The primary structure comprises 142 residues: Large ribosomal subunit protein uL13 (142 aa).

The protein belongs to the universal ribosomal protein uL13 family. In terms of assembly, part of the 50S ribosomal subunit.

Functionally, this protein is one of the early assembly proteins of the 50S ribosomal subunit, although it is not seen to bind rRNA by itself. It is important during the early stages of 50S assembly. The polypeptide is Large ribosomal subunit protein uL13 (Janthinobacterium sp. (strain Marseille) (Minibacterium massiliensis)).